Consider the following 267-residue polypeptide: Coiled-coil domain-containing protein 90B, mitochondrial (267 aa).

The N-terminal 47 residues, 1-47, are a transit peptide targeting the mitochondrion; sequence MKGSQLYRHLSLQGNRLHLHLFQGKKLQLHPSQGHKGTAHRTWKKGF. Positions 142–175 form a coiled coil; that stretch reads LEKSEFATLRAENEKMKIELEHVRQHLLNETNRI. A helical transmembrane segment spans residues 244 to 266; it reads TVRYMAASVFTCLAIALGFYRLW.

This sequence belongs to the CCDC90 family.

It is found in the mitochondrion membrane. This Xenopus tropicalis (Western clawed frog) protein is Coiled-coil domain-containing protein 90B, mitochondrial (ccdc90b).